A 159-amino-acid polypeptide reads, in one-letter code: Regulatory protein RecX (159 aa).

This sequence belongs to the RecX family.

Its subcellular location is the cytoplasm. Its function is as follows. Modulates RecA activity. The polypeptide is Regulatory protein RecX (Chlorobium limicola (strain DSM 245 / NBRC 103803 / 6330)).